A 598-amino-acid chain; its full sequence is Nuclear receptor subfamily 4 group A member 2 (598 aa).

Residues 1-22 are disordered; that stretch reads MPCVQAQYGSSPQGASPASQSY. Positions 8-22 are enriched in low complexity; the sequence is YGSSPQGASPASQSY. The nuclear receptor DNA-binding region spans 260 to 335; the sequence is EGLCAVCGDN…VGMVKEVVRT (76 aa). NR C4-type zinc fingers lie at residues 263–283 and 299–323; these read CAVCGDNAACQHYGVRTCEGC and CLANKNCPVDKRRRNRCQYCRFQKC. The short motif at 287–314 is the Bipartite nuclear localization signal (NLS1) element; sequence FKRTVQKNAKYVCLANKNCPVDKRRRNR. The disordered stretch occupies residues 337–361; that stretch reads SLKGRRGRLPSKPKSPQDPSPPSPP. The Nuclear localization signal (NLS1) signature appears at 338–350; sequence LKGRRGRLPSKPK. Over residues 352–361 the composition is skewed to pro residues; sequence PQDPSPPSPP. One can recognise an NR LBD domain in the interval 360-595; that stretch reads PPVSLISALV…AIIDKLFLDT (236 aa). The nuclear export sequence (NES1) signature appears at 443–452; sequence FLELFVLRLA. The nuclear export sequence (NES2) motif lies at 568 to 577; that stretch reads QGLQRIFYLK.

The protein belongs to the nuclear hormone receptor family. NR4 subfamily. Interacts with SFPQ, NCOR2, SIN3A and HADC1. The interaction with NCOR2 increases in the absence of PITX3. Interacts with PER2. As to expression, shows a ubiquitous distribution in the cerebral cortex, hippocampus, thalamus, amygdala, and midbrain. Expression increases in prenatally stressed adult offspring in the ventral tegmental area, whereas no changes are observed in the substantia nigra area (at protein level). Not expressed in quiescent liver but is rapidly induced following partial hepatectomy and is specific to hepatic growth as it is not induced in other mitogen-treated cells. Expressed at very low levels in the lung, spleen and stomach and at high levels in the brain.

It localises to the cytoplasm. The protein resides in the nucleus. Its function is as follows. Transcriptional regulator which is important for the differentiation and maintenance of meso-diencephalic dopaminergic (mdDA) neurons during development. It is crucial for expression of a set of genes such as SLC6A3, SLC18A2, TH and DRD2 which are essential for development of mdDA neurons. May confer liver-specific regulation of delayed-early genes induced later in the G1 phase of regeneration along with NR4A1. This is Nuclear receptor subfamily 4 group A member 2 (Nr4a2) from Rattus norvegicus (Rat).